A 353-amino-acid polypeptide reads, in one-letter code: Photosystem II protein D1 (353 aa).

Thr-2 bears the N-acetylthreonine mark. At Thr-2 the chain carries Phosphothreonine. A run of 3 helical transmembrane segments spans residues 29–46, 118–133, and 142–156; these read YIGWFGVLMIPTLLTATS, HFLLGVACYMGREWEL, and WIAIAYSAPVAAATA. His-118 is a chlorophyll a binding site. Residue Tyr-126 participates in pheophytin a binding. 2 residues coordinate [CaMn4O5] cluster: Asp-170 and Glu-189. The helical transmembrane segment at 197 to 218 threads the bilayer; sequence FHMLGVAGVFGGSLFSAMHGSL. His-198 lines the chlorophyll a pocket. A quinone-binding positions include His-215 and 264–265; that span reads SF. His-215 contributes to the Fe cation binding site. His-272 lines the Fe cation pocket. A helical membrane pass occupies residues 274-288; sequence FLAAWPVIGIWFTAL. His-332, Glu-333, Asp-342, and Ala-344 together coordinate [CaMn4O5] cluster. Residues 345–353 constitute a propeptide that is removed on maturation; that stretch reads TFEVSATNA.

Belongs to the reaction center PufL/M/PsbA/D family. PSII is composed of 1 copy each of membrane proteins PsbA, PsbB, PsbC, PsbD, PsbE, PsbF, PsbH, PsbI, PsbJ, PsbK, PsbL, PsbM, PsbT, PsbX, PsbY, PsbZ, Psb30/Ycf12, at least 3 peripheral proteins of the oxygen-evolving complex and a large number of cofactors. It forms dimeric complexes. Requires The D1/D2 heterodimer binds P680, chlorophylls that are the primary electron donor of PSII, and subsequent electron acceptors. It shares a non-heme iron and each subunit binds pheophytin, quinone, additional chlorophylls, carotenoids and lipids. D1 provides most of the ligands for the Mn4-Ca-O5 cluster of the oxygen-evolving complex (OEC). There is also a Cl(-1) ion associated with D1 and D2, which is required for oxygen evolution. The PSII complex binds additional chlorophylls, carotenoids and specific lipids. as cofactor. Post-translationally, tyr-161 forms a radical intermediate that is referred to as redox-active TyrZ, YZ or Y-Z. In terms of processing, C-terminally processed by CTPA; processing is essential to allow assembly of the oxygen-evolving complex and thus photosynthetic growth.

The protein localises to the plastid membrane. It catalyses the reaction 2 a plastoquinone + 4 hnu + 2 H2O = 2 a plastoquinol + O2. Its function is as follows. Photosystem II (PSII) is a light-driven water:plastoquinone oxidoreductase that uses light energy to abstract electrons from H(2)O, generating O(2) and a proton gradient subsequently used for ATP formation. It consists of a core antenna complex that captures photons, and an electron transfer chain that converts photonic excitation into a charge separation. The D1/D2 (PsbA/PsbD) reaction center heterodimer binds P680, the primary electron donor of PSII as well as several subsequent electron acceptors. The sequence is that of Photosystem II protein D1 from Cuscuta gronovii (Common dodder).